We begin with the raw amino-acid sequence, 187 residues long: Auxin-binding protein T85 (187 aa).

Positions 1–20 are cleaved as a signal peptide; the sequence is MARHVLVVVAVLLFATAEAS. The cysteines at positions 22 and 177 are disulfide-linked. Zn(2+)-binding residues include His78, His80, and Glu84. An N-linked (GlcNAc...) asparagine glycan is attached at Asn117. Zn(2+) is bound at residue His128. A Prevents secretion from ER motif is present at residues 184-187; sequence KDEL.

Homodimer.

The protein resides in the endoplasmic reticulum lumen. Its function is as follows. This is probably a receptor for the plant hormone auxin. The polypeptide is Auxin-binding protein T85 (T85) (Nicotiana tabacum (Common tobacco)).